The following is a 418-amino-acid chain: Voltage-gated ClC-type chloride channel ClcB (418 aa).

The next 10 membrane-spanning stretches (helical) occupy residues 5–25 (LLIA…FRHA), 54–74 (LLTP…WQKF), 146–166 (LWIA…PLAG), 168–188 (LFIA…PVII), 222–242 (ALII…LTLM), 258–278 (WQLA…PAVW), 291–311 (APPL…AVLA), 316–336 (GAPG…GMLY), 352–372 (LLLG…APIM), and 380–400 (MTGE…ASVI).

It belongs to the chloride channel (TC 2.A.49) family. ClcB subfamily.

It is found in the cell inner membrane. In terms of biological role, probably acts as an electrical shunt for an outwardly-directed proton pump that is linked to amino acid decarboxylation, as part of the extreme acid resistance (XAR) response. The sequence is that of Voltage-gated ClC-type chloride channel ClcB from Shigella boydii serotype 18 (strain CDC 3083-94 / BS512).